Here is a 50-residue protein sequence, read N- to C-terminus: Defensin-like protein 1 (50 aa).

Intrachain disulfides connect cysteine 3/cysteine 50, cysteine 14/cysteine 35, cysteine 20/cysteine 44, and cysteine 24/cysteine 46.

Belongs to the DEFL family.

The protein localises to the secreted. In terms of biological role, possesses antimicrobial activity sensitive to inorganic cations. Has no inhibitory effect on insect gut alpha-amylase. Induces potential changes in fungal membranes and increased K+ efflux and Ca(2+) uptake. Interacts with sphingolipids and ergosterols found in fungal plasma membranes. The sequence is that of Defensin-like protein 1 from Dahlia merckii (Bedding dahlia).